The following is a 567-amino-acid chain: Sensor histidine kinase MtrB (567 aa).

The span at 1 to 15 (MIFGSRRRIRGRRGR) shows a compositional bias: basic residues. Residues 1 to 20 (MIFGSRRRIRGRRGRSGPMT) are disordered. 2 helical membrane-spanning segments follow: residues 42–62 (VVAL…FVLT) and 213–233 (GTMA…ALLV). The region spanning 235–287 (RQVVVPVRSASRIAERFAEGHLSERMPVRGEDDMARLAVSFNDMAESLSRQIA) is the HAMP domain. Positions 302–519 (DVSHELRTPL…CFRLTLPMVR (218 aa)) constitute a Histidine kinase domain. His305 bears the Phosphohistidine; by autocatalysis mark. The segment covering 529–551 (PMKPIPQPVLQPVAQPNPQPMPP) has biased composition (pro residues). The interval 529–567 (PMKPIPQPVLQPVAQPNPQPMPPEYKERQRPREHAEWSG) is disordered. A compositionally biased stretch (basic and acidic residues) spans 552–567 (EYKERQRPREHAEWSG).

As to quaternary structure, interacts with MrtA. Interacts with LpqB, probably extracytoplasmically via MtrB's sensor domain. Mg(2+) is required as a cofactor. Requires Ca(2+) as cofactor. The C-terminal domain (residues 234-567) autophosphorylates.

The protein localises to the cell membrane. It carries out the reaction ATP + protein L-histidine = ADP + protein N-phospho-L-histidine.. Ca(2+) ions inhibit the phosphotransfer from MtrB to MtrA. Member of the two-component regulatory system MtrA/MtrB. Probably functions as a membrane-associated protein kinase that phosphorylates MtrA in response to environmental signals. Autophosphorylates and transfers phosphate to MtrA in vitro. Overexpression of MtrA alone decreases bacterial virulence in mouse infection; co-expression of MtrA and MtrB restores normal bacterial growth, suggesting that bacterial growth in macrophages requires an optimal ratio of MtrB to MtrA. Probably plays a role in cell division. In Mycobacterium tuberculosis (strain ATCC 25618 / H37Rv), this protein is Sensor histidine kinase MtrB (mtrB).